Here is a 355-residue protein sequence, read N- to C-terminus: Erythronate-4-phosphate dehydrogenase (355 aa).

The substrate site is built by serine 45 and threonine 66. Aspartate 146 is an NAD(+) binding site. Arginine 206 is a catalytic residue. Aspartate 229 serves as a coordination point for NAD(+). Glutamate 234 is an active-site residue. Catalysis depends on histidine 251, which acts as the Proton donor. Glycine 254 contacts NAD(+). Residue tyrosine 255 participates in substrate binding.

It belongs to the D-isomer specific 2-hydroxyacid dehydrogenase family. PdxB subfamily. As to quaternary structure, homodimer.

It is found in the cytoplasm. It catalyses the reaction 4-phospho-D-erythronate + NAD(+) = (R)-3-hydroxy-2-oxo-4-phosphooxybutanoate + NADH + H(+). Its pathway is cofactor biosynthesis; pyridoxine 5'-phosphate biosynthesis; pyridoxine 5'-phosphate from D-erythrose 4-phosphate: step 2/5. Functionally, catalyzes the oxidation of erythronate-4-phosphate to 3-hydroxy-2-oxo-4-phosphonooxybutanoate. The chain is Erythronate-4-phosphate dehydrogenase from Acinetobacter baylyi (strain ATCC 33305 / BD413 / ADP1).